The sequence spans 505 residues: Deoxyguanosinetriphosphate triphosphohydrolase (505 aa).

In terms of domain architecture, HD spans 66–273; that stretch reads RLTHSMEVQQ…MEAADDISYC (208 aa).

It belongs to the dGTPase family. Type 1 subfamily. In terms of assembly, homotetramer. The cofactor is Mg(2+).

It catalyses the reaction dGTP + H2O = 2'-deoxyguanosine + triphosphate + H(+). DGTPase preferentially hydrolyzes dGTP over the other canonical NTPs. The polypeptide is Deoxyguanosinetriphosphate triphosphohydrolase (Shigella flexneri).